The primary structure comprises 194 residues: DNA replication complex GINS protein PSF3 (194 aa).

Belongs to the GINS3/PSF3 family. In terms of assembly, component of the GINS complex which is a heterotetramer of SLD5, PSF1, PSF2 and PSF3.

Its subcellular location is the nucleus. Functionally, functions as part of the GINS complex which plays an essential role in the initiation of DNA replication by binding to DNA replication origins and facilitating the assembly of the DNA replication machinery. This Saccharomyces cerevisiae (strain ATCC 204508 / S288c) (Baker's yeast) protein is DNA replication complex GINS protein PSF3.